The sequence spans 494 residues: V-type proton ATPase subunit B (494 aa).

This sequence belongs to the ATPase alpha/beta chains family. In terms of assembly, V-ATPase is a heteromultimeric enzyme composed of a peripheral catalytic V1 complex (main components: subunits A, B, C, D, E, and F) attached to an integral membrane V0 proton pore complex (main component: the proteolipid protein).

In terms of biological role, non-catalytic subunit of the peripheral V1 complex of vacuolar ATPase. V-ATPase is responsible for acidifying a variety of intracellular compartments in eukaryotic cells. The sequence is that of V-type proton ATPase subunit B (VAPB) from Plasmodium falciparum.